Reading from the N-terminus, the 582-residue chain is 2-succinyl-5-enolpyruvyl-6-hydroxy-3-cyclohexene-1-carboxylate synthase (582 aa).

It belongs to the TPP enzyme family. MenD subfamily. Homodimer. Mg(2+) serves as cofactor. It depends on Mn(2+) as a cofactor. Requires thiamine diphosphate as cofactor.

The catalysed reaction is isochorismate + 2-oxoglutarate + H(+) = 5-enolpyruvoyl-6-hydroxy-2-succinyl-cyclohex-3-ene-1-carboxylate + CO2. The protein operates within quinol/quinone metabolism; 1,4-dihydroxy-2-naphthoate biosynthesis; 1,4-dihydroxy-2-naphthoate from chorismate: step 2/7. It functions in the pathway cofactor biosynthesis; phylloquinone biosynthesis. Catalyzes the thiamine diphosphate-dependent decarboxylation of 2-oxoglutarate and the subsequent addition of the resulting succinic semialdehyde-thiamine pyrophosphate anion to isochorismate to yield 2-succinyl-5-enolpyruvyl-6-hydroxy-3-cyclohexene-1-carboxylate (SEPHCHC). The polypeptide is 2-succinyl-5-enolpyruvyl-6-hydroxy-3-cyclohexene-1-carboxylate synthase (Prochlorococcus marinus (strain MIT 9313)).